Reading from the N-terminus, the 358-residue chain is 3-dehydroquinate synthase (358 aa).

Residues 70 to 75 (DGEQYK), 104 to 108 (GVIGD), 128 to 129 (TT), Lys-141, Lys-150, and 168 to 171 (CLST) each bind NAD(+). Residues Glu-183, His-246, and His-263 each coordinate Zn(2+).

This sequence belongs to the sugar phosphate cyclases superfamily. Dehydroquinate synthase family. Co(2+) is required as a cofactor. Zn(2+) serves as cofactor. The cofactor is NAD(+).

It is found in the cytoplasm. It catalyses the reaction 7-phospho-2-dehydro-3-deoxy-D-arabino-heptonate = 3-dehydroquinate + phosphate. Its pathway is metabolic intermediate biosynthesis; chorismate biosynthesis; chorismate from D-erythrose 4-phosphate and phosphoenolpyruvate: step 2/7. Its function is as follows. Catalyzes the conversion of 3-deoxy-D-arabino-heptulosonate 7-phosphate (DAHP) to dehydroquinate (DHQ). This Shewanella woodyi (strain ATCC 51908 / MS32) protein is 3-dehydroquinate synthase.